Consider the following 359-residue polypeptide: EGF-like domain containing protein 2 (359 aa).

An N-terminal signal peptide occupies residues 1 to 20 (MPPFISHFFLLSTFASLALC). 2 EGF-like domains span residues 21 to 55 (SFYC…FNCG) and 61 to 93 (ISAA…PTCQ). Cystine bridges form between cysteine 24-cysteine 37, cysteine 31-cysteine 43, cysteine 45-cysteine 54, cysteine 65-cysteine 75, cysteine 69-cysteine 81, and cysteine 83-cysteine 92.

As to expression, prismatic layer of shell (at protein level). Expressed primarily in the mantle with highest level in the mantle edge and lower level in the mantle pallium.

It localises to the secreted. The sequence is that of EGF-like domain containing protein 2 from Margaritifera margaritifera (Freshwater pearl mussel).